Here is a 389-residue protein sequence, read N- to C-terminus: Large envelope protein (389 aa).

N-acetylmethionine is present on methionine 1. Residue glycine 2 is the site of N-myristoyl glycine; by host attachment. Residues 2–108 form a pre-S1 region; it reads GQNLSTSNPL…PPLRTTHPQA (107 aa). The interval 2 to 163 is pre-S; the sequence is GQNLSTSNPL…FSRIGDPALN (162 aa). Residues 2 to 170 lie on the Virion surface; in external conformation side of the membrane; sequence GQNLSTSNPL…ALNMENITSG (169 aa). Over 2 to 242 the chain is Intravirion; in internal conformation; the sequence is GQNLSTSNPL…PGYRWMCLRR (241 aa). The disordered stretch occupies residues 76–102; it reads TLPANPPPASTNRQSGRQPTPLSPPLR. The span at 85–95 shows a compositional bias: polar residues; the sequence is STNRQSGRQPT. Positions 109–163 are pre-S2; that stretch reads MHWNSTTFHQTLQDPRVRGLYFPAGGSSSGTVNPVPTTTSPISSIFSRIGDPALN. Residues 171–191 traverse the membrane as a helical segment; it reads FLGPLLVLQAGFFLLTRILTI. The Intravirion; in external conformation portion of the chain corresponds to 192-242; it reads PQSLDSWWTSLNFLGGTTVCLGQNSQSPISNHSPTSCPPTCPGYRWMCLRR. Residues 243-263 traverse the membrane as a helical segment; that stretch reads FIIFLFILLLCLIFLLVLLDY. The Virion surface portion of the chain corresponds to 264–337; it reads QGMLPVCPLI…WASARFSWLS (74 aa). N-linked (GlcNAc...) asparagine; by host glycosylation is present at asparagine 309. The helical transmembrane segment at 338–358 threads the bilayer; the sequence is LLVPFVQWFVGLSPIVWLSVI. The Intravirion portion of the chain corresponds to 359–364; the sequence is WMMWYW. A helical membrane pass occupies residues 365–387; it reads GPSLYSILSPFLPLLPIFFCLWA. Residues 388-389 are Virion surface-facing; it reads YI.

The protein belongs to the orthohepadnavirus major surface antigen family. In its internal form (Li-HBsAg), interacts with the capsid protein and with the isoform S. Interacts with host chaperone CANX. In terms of assembly, associates with host chaperone CANX through its pre-S2 N glycan; this association may be essential for isoform M proper secretion. As to quaternary structure, interacts with isoform L. Interacts with the antigens of satellite virus HDV (HDVAgs); this interaction is required for encapsidation of HDV genomic RNA. In terms of processing, isoform M is N-terminally acetylated by host at a ratio of 90%, and N-glycosylated by host at the pre-S2 region. Myristoylated.

The protein localises to the virion membrane. The large envelope protein exists in two topological conformations, one which is termed 'external' or Le-HBsAg and the other 'internal' or Li-HBsAg. In its external conformation the protein attaches the virus to cell receptors and thereby initiating infection. This interaction determines the species specificity and liver tropism. This attachment induces virion internalization predominantly through caveolin-mediated endocytosis. The large envelope protein also assures fusion between virion membrane and endosomal membrane. In its internal conformation the protein plays a role in virion morphogenesis and mediates the contact with the nucleocapsid like a matrix protein. In terms of biological role, the middle envelope protein plays an important role in the budding of the virion. It is involved in the induction of budding in a nucleocapsid independent way. In this process the majority of envelope proteins bud to form subviral lipoprotein particles of 22 nm of diameter that do not contain a nucleocapsid. This Hepatitis B virus genotype D subtype adw (isolate United Kingdom/adyw/1979) (HBV-D) protein is Large envelope protein.